A 483-amino-acid chain; its full sequence is ATP-dependent RNA helicase DDX25 (483 aa).

Position 49 is a phosphothreonine (T49). The short motif at 61–74 is the Nuclear export signal element; sequence LAANSLLNKLIRQS. The short motif at 97-125 is the Q motif element; it reads KTFEELRLKEELLKGIYAMGFNRPSKIQE. The short motif at 100 to 114 is the Nuclear localization signal element; the sequence is EELRLKEELLKGIYA. In terms of domain architecture, Helicase ATP-binding spans 130 to 300; sequence MMLAHPPQNL…ERIIPDPNVI (171 aa). 143-150 is an ATP binding site; it reads SQSGTGKT. A DEAD box motif is present at residues 247-250; sequence DEAD. Residues 311 to 478 form the Helicase C-terminal domain; that stretch reads NIRQYYVLCE…QLDPEDMDEI (168 aa).

This sequence belongs to the DEAD box helicase family. In terms of processing, phosphorylated on threonine residues. The phosphorylated form is found in the cytoplasm but not in the nucleus. Isoform 1 is expressed in germ cells. Isoform 2 is highly expressed in Leydig cells and weakly expressed in the pituitary and hypothalamus. Isoform 3 is weakly expressed only in germ cells.

The protein localises to the cytoplasm. It localises to the nucleus. The enzyme catalyses ATP + H2O = ADP + phosphate + H(+). In terms of biological role, ATP-dependent RNA helicase. Required for mRNA export and translation regulation during spermatid development. In Rattus norvegicus (Rat), this protein is ATP-dependent RNA helicase DDX25 (Ddx25).